Here is a 353-residue protein sequence, read N- to C-terminus: Outer membrane protein P5 (353 aa).

The N-terminal stretch at 1–21 (MKKTAIALVVAGLAAASVAQA) is a signal peptide. The next 8 membrane-spanning stretches (beta stranded) occupy residues 27 to 37 (TFYAGVKAGQA), 58 to 69 (SFTYGVFGGYQI), 77 to 85 (LAVELGYDD), 104 to 115 (HGAHLSLKGSYE), 120 to 128 (LDVYGKAGV), 158 to 167 (GLFAVGAEYA), 172 to 179 (LAVRLEYQ), and 205 to 213 (SINAGISYR). Positions 227–353 (VVSKTFSLNS…RVEIAVNGTK (127 aa)) constitute an OmpA-like domain. Cys326 and Cys338 are joined by a disulfide.

Belongs to the outer membrane OOP (TC 1.B.6) superfamily. OmpA family. Monomer and homodimer.

It localises to the cell outer membrane. With TolR probably plays a role in maintaining the position of the peptidoglycan cell wall in the periplasm. Acts as a porin with low permeability that allows slow penetration of small solutes; an internal gate slows down solute passage. This chain is Outer membrane protein P5, found in Haemophilus influenzae.